A 112-amino-acid chain; its full sequence is MLRSAPLALGLEPHPLNNSLAFPVFYHIHCYCPSPLLLSLLLHYTVLFSPFGARNHKLYIYIYIYIYIYIYMCINVCTYMNAGPRGVCSLCVYVCTHFNIYIHTYIYLLFVY.

3 helical membrane passes run 33–53, 58–78, and 91–111; these read PSPLLLSLLLHYTVLFSPFGA, LYIYIYIYIYIYIYMCINVCT, and CVYVCTHFNIYIHTYIYLLFV.

It is found in the membrane. This is an uncharacterized protein from Saccharomyces cerevisiae (strain ATCC 204508 / S288c) (Baker's yeast).